Consider the following 1286-residue polypeptide: DNA-directed RNA polymerase 147 kDa polypeptide (1286 aa).

Belongs to the poxviridae DNA-directed RNA polymerase 147 kDa subunit family. As to quaternary structure, the DNA-dependent RNA polymerase used for intermediate and late genes expression consists of eight subunits Rpo30/OPG66, Rpo7/OPG90, Rpo22/OPG103, Rpo147/OPG105, Rpo18/OPG119, Rpo19/OPG131, Rpo132/OPG151 and Rpo35/OPG156. The same holoenzyme, with the addition of the transcription-specificity factor OPG109, is used for early gene expression.

Its subcellular location is the virion. It carries out the reaction RNA(n) + a ribonucleoside 5'-triphosphate = RNA(n+1) + diphosphate. Functionally, part of the DNA-dependent RNA polymerase which catalyzes the transcription of viral DNA into RNA using the four ribonucleoside triphosphates as substrates. Responsible for the transcription of early, intermediate and late genes. DNA-dependent RNA polymerase associates with the early transcription factor (ETF), itself composed of OPG118 and OPG133, thereby allowing the early genes transcription. Late transcription, and probably also intermediate transcription, require newly synthesized RNA polymerase. This is DNA-directed RNA polymerase 147 kDa polypeptide (OPG105) from Vaccinia virus (strain Ankara) (VACV).